Here is a 227-residue protein sequence, read N- to C-terminus: Cytochrome c oxidase subunit 2 (227 aa).

Residues 1–14 are Mitochondrial intermembrane-facing; the sequence is MACPVQLGFQDAAS. The chain crosses the membrane as a helical span at residues 15–45; the sequence is PIMEELTYFHDHTLMIVFLISSLVLYIISLM. The Mitochondrial matrix segment spans residues 46–59; it reads LTTELTHTSTMDAQ. A helical transmembrane segment spans residues 60–87; the sequence is EVETVWTILPAVILILIALPSLRILYMM. The Mitochondrial intermembrane portion of the chain corresponds to 88-227; sequence DEITTPSLTL…HFEEWLLAML (140 aa). 6 residues coordinate Cu cation: His161, Cys196, Glu198, Cys200, His204, and Met207. Position 198 (Glu198) interacts with Mg(2+).

The protein belongs to the cytochrome c oxidase subunit 2 family. Component of the cytochrome c oxidase (complex IV, CIV), a multisubunit enzyme composed of 14 subunits. The complex is composed of a catalytic core of 3 subunits MT-CO1, MT-CO2 and MT-CO3, encoded in the mitochondrial DNA, and 11 supernumerary subunits COX4I, COX5A, COX5B, COX6A, COX6B, COX6C, COX7A, COX7B, COX7C, COX8 and NDUFA4, which are encoded in the nuclear genome. The complex exists as a monomer or a dimer and forms supercomplexes (SCs) in the inner mitochondrial membrane with NADH-ubiquinone oxidoreductase (complex I, CI) and ubiquinol-cytochrome c oxidoreductase (cytochrome b-c1 complex, complex III, CIII), resulting in different assemblies (supercomplex SCI(1)III(2)IV(1) and megacomplex MCI(2)III(2)IV(2)). Found in a complex with TMEM177, COA6, COX18, COX20, SCO1 and SCO2. Interacts with TMEM177 in a COX20-dependent manner. Interacts with COX20. Interacts with COX16. Cu cation is required as a cofactor.

Its subcellular location is the mitochondrion inner membrane. The enzyme catalyses 4 Fe(II)-[cytochrome c] + O2 + 8 H(+)(in) = 4 Fe(III)-[cytochrome c] + 2 H2O + 4 H(+)(out). Component of the cytochrome c oxidase, the last enzyme in the mitochondrial electron transport chain which drives oxidative phosphorylation. The respiratory chain contains 3 multisubunit complexes succinate dehydrogenase (complex II, CII), ubiquinol-cytochrome c oxidoreductase (cytochrome b-c1 complex, complex III, CIII) and cytochrome c oxidase (complex IV, CIV), that cooperate to transfer electrons derived from NADH and succinate to molecular oxygen, creating an electrochemical gradient over the inner membrane that drives transmembrane transport and the ATP synthase. Cytochrome c oxidase is the component of the respiratory chain that catalyzes the reduction of oxygen to water. Electrons originating from reduced cytochrome c in the intermembrane space (IMS) are transferred via the dinuclear copper A center (CU(A)) of subunit 2 and heme A of subunit 1 to the active site in subunit 1, a binuclear center (BNC) formed by heme A3 and copper B (CU(B)). The BNC reduces molecular oxygen to 2 water molecules using 4 electrons from cytochrome c in the IMS and 4 protons from the mitochondrial matrix. This chain is Cytochrome c oxidase subunit 2 (MT-CO2), found in Cheirogaleus medius (Fat-tailed dwarf lemur).